The following is a 318-amino-acid chain: Methionyl-tRNA formyltransferase (318 aa).

Position 112-115 (112-115 (SILP)) interacts with (6S)-5,6,7,8-tetrahydrofolate.

Belongs to the Fmt family.

The enzyme catalyses L-methionyl-tRNA(fMet) + (6R)-10-formyltetrahydrofolate = N-formyl-L-methionyl-tRNA(fMet) + (6S)-5,6,7,8-tetrahydrofolate + H(+). Its function is as follows. Attaches a formyl group to the free amino group of methionyl-tRNA(fMet). The formyl group appears to play a dual role in the initiator identity of N-formylmethionyl-tRNA by promoting its recognition by IF2 and preventing the misappropriation of this tRNA by the elongation apparatus. The sequence is that of Methionyl-tRNA formyltransferase from Haemophilus influenzae (strain PittGG).